Reading from the N-terminus, the 778-residue chain is Kin of IRRE-like protein 3 (778 aa).

An N-terminal signal peptide occupies residues 1–21; the sequence is MKPFQLDLLFVCFFLFSQELG. Topologically, residues 22–535 are extracellular; the sequence is LQKRGCCLVL…GLEAESVPMA (514 aa). Ig-like C2-type domains lie at 48 to 142, 147 to 243, 249 to 330, 335 to 415, and 419 to 515; these read YSFS…ARLT, PDDP…TSVT, PPLV…RTVD, PRMT…VTLT, and PPII…IRLK. Residues C69 and C127 are joined by a disulfide bond. N-linked (GlcNAc...) asparagine glycosylation occurs at N167. A disulfide bridge links C170 with C227. N253 carries an N-linked (GlcNAc...) asparagine glycan. C271 and C314 are oxidised to a cystine. N-linked (GlcNAc...) asparagine glycosylation occurs at N324. 2 disulfide bridges follow: C356-C398 and C440-C499. An N-linked (GlcNAc...) asparagine glycan is attached at N498. Residues 536-556 traverse the membrane as a helical segment; it reads VIIGVAVGAGVAFLVLMATIV. Residues 557 to 778 are Cytoplasmic-facing; that stretch reads AFCCARSQRN…PLQRRMQTHV (222 aa). Polar residues predominate over residues 727-736; that stretch reads CDSSVSSSGK. A disordered region spans residues 727-778; the sequence is CDSSVSSSGKQDGYVQFDKASKASASSSHHSQSSSQNSDPSRPLQRRMQTHV. Residues 748-762 are compositionally biased toward low complexity; sequence KASASSSHHSQSSSQ.

It belongs to the immunoglobulin superfamily. Homodimer; mediates homophilic interactions to promote cell adhesion. Interacts with NPHS1; forms heterodimers with NPHS1. Interacts with NPHS2/podocin (via the C-terminus). Interacts with CASK. Interacts (via extracellular region) with MAP1B. Interacts (via extracellular region) with MYO16. Interacts (via intracellular region) with ATP1B1. Interacts (via intracellular region) with SHMT2. Interacts (via intracellular region) with UFC1. In terms of processing, undergoes proteolysis by a metalloprotease and gives rise to a soluble form. In terms of tissue distribution, expressed in fetal and adult brain. Also expressed in kidney, specifically in podocytes of kidney glomeruli. Also expressed in skeletal muscle.

The protein localises to the cell membrane. Its subcellular location is the secreted. Functionally, synaptic adhesion molecule required for the formation of target-specific synapses. Required for formation of target-specific synapses at hippocampal mossy fiber synapses. Required for formation of mossy fiber filopodia, the synaptic structures connecting dentate granule and GABA neurons. Probably acts as a homophilic adhesion molecule that promotes trans-cellular interactions and stabilize mossy fiber filipodia contact and subsequent synapse formation. Required for the coalescence of vomeronasal sensory neuron axons. May be involved in the hematopoietic supportive capacity of stroma cells; the secreted extracellular domain is directly responsible for supporting hematopoietic stem cells. This is Kin of IRRE-like protein 3 from Homo sapiens (Human).